The following is a 940-amino-acid chain: Leucine--tRNA ligase, mitochondrial (940 aa).

The 'HIGH' region motif lies at 54 to 64 (PYPSGALHMGH). The 'KMSKS' region motif lies at 638-642 (TINKL). K641 contacts ATP. Residues 724-744 (KEQHQHQQQQHQQPLPSSEFN) are disordered.

It belongs to the class-I aminoacyl-tRNA synthetase family.

The protein localises to the mitochondrion. It carries out the reaction tRNA(Leu) + L-leucine + ATP = L-leucyl-tRNA(Leu) + AMP + diphosphate. The protein is Leucine--tRNA ligase, mitochondrial (mleuS) of Dictyostelium discoideum (Social amoeba).